The primary structure comprises 522 residues: Protein nucleotidyltransferase YdiU (522 aa).

ATP-binding residues include glycine 101, glycine 103, arginine 104, lysine 123, aspartate 135, glycine 136, arginine 193, and arginine 200. Aspartate 270 functions as the Proton acceptor in the catalytic mechanism. Mg(2+) contacts are provided by asparagine 271 and aspartate 280. Residue aspartate 280 participates in ATP binding.

Belongs to the SELO family. The cofactor is Mg(2+). Mn(2+) serves as cofactor.

The enzyme catalyses L-seryl-[protein] + ATP = 3-O-(5'-adenylyl)-L-seryl-[protein] + diphosphate. It carries out the reaction L-threonyl-[protein] + ATP = 3-O-(5'-adenylyl)-L-threonyl-[protein] + diphosphate. It catalyses the reaction L-tyrosyl-[protein] + ATP = O-(5'-adenylyl)-L-tyrosyl-[protein] + diphosphate. The catalysed reaction is L-histidyl-[protein] + UTP = N(tele)-(5'-uridylyl)-L-histidyl-[protein] + diphosphate. The enzyme catalyses L-seryl-[protein] + UTP = O-(5'-uridylyl)-L-seryl-[protein] + diphosphate. It carries out the reaction L-tyrosyl-[protein] + UTP = O-(5'-uridylyl)-L-tyrosyl-[protein] + diphosphate. In terms of biological role, nucleotidyltransferase involved in the post-translational modification of proteins. It can catalyze the addition of adenosine monophosphate (AMP) or uridine monophosphate (UMP) to a protein, resulting in modifications known as AMPylation and UMPylation. The polypeptide is Protein nucleotidyltransferase YdiU (Flavobacterium johnsoniae (strain ATCC 17061 / DSM 2064 / JCM 8514 / BCRC 14874 / CCUG 350202 / NBRC 14942 / NCIMB 11054 / UW101) (Cytophaga johnsonae)).